The following is a 135-amino-acid chain: Large ribosomal subunit protein uL16c (135 aa).

Positions 1–17 are enriched in basic residues; the sequence is MLSPKRTRFRKQHRGRM. A disordered region spans residues 1-21; it reads MLSPKRTRFRKQHRGRMKGVS.

This sequence belongs to the universal ribosomal protein uL16 family. Part of the 50S ribosomal subunit.

Its subcellular location is the plastid. The protein resides in the chloroplast. This is Large ribosomal subunit protein uL16c from Amborella trichopoda.